Reading from the N-terminus, the 263-residue chain is Non-functional protein STAY-GREEN, chloroplastic (263 aa).

The N-terminal 54 residues, 1–54 (MDTLTSAPLLTSKFKPSFSPQQKPCFPHRRRFENGKKKQSIVPVARLFGPAIFE), are a transit peptide targeting the chloroplast.

Belongs to the staygreen family.

The protein resides in the plastid. It localises to the chloroplast. Functionally, non-functional protein probably interfering with the disassembling mechanism of the intact light-harvesting complex of photosystem II (LHCII) in the thylakoid membranes. Responsible for a stay-green phenotype. The chain is Non-functional protein STAY-GREEN, chloroplastic (SGR) from Pisum sativum (Garden pea).